A 292-amino-acid chain; its full sequence is Phosphoribosylaminoimidazole-succinocarboxamide synthase (292 aa).

Belongs to the SAICAR synthetase family.

The catalysed reaction is 5-amino-1-(5-phospho-D-ribosyl)imidazole-4-carboxylate + L-aspartate + ATP = (2S)-2-[5-amino-1-(5-phospho-beta-D-ribosyl)imidazole-4-carboxamido]succinate + ADP + phosphate + 2 H(+). It participates in purine metabolism; IMP biosynthesis via de novo pathway; 5-amino-1-(5-phospho-D-ribosyl)imidazole-4-carboxamide from 5-amino-1-(5-phospho-D-ribosyl)imidazole-4-carboxylate: step 1/2. This Elusimicrobium minutum (strain Pei191) protein is Phosphoribosylaminoimidazole-succinocarboxamide synthase.